The chain runs to 423 residues: Ornithine cyclodeaminase (423 aa).

NAD(+) contacts are provided by Asn-241, Ala-242, Asp-320, Thr-352, Met-353, Leu-354, His-355, Asp-373, Asp-396, and Val-397.

This sequence belongs to the AgrE/ArgZ ornithine cyclodeaminase family. NAD(+) serves as cofactor.

The catalysed reaction is L-ornithine = L-proline + NH4(+). Functionally, catalyzes the conversion of ornithine to proline, with the release of ammonia. This chain is Ornithine cyclodeaminase, found in Methanocaldococcus jannaschii (strain ATCC 43067 / DSM 2661 / JAL-1 / JCM 10045 / NBRC 100440) (Methanococcus jannaschii).